We begin with the raw amino-acid sequence, 55 residues long: Photosystem II reaction center protein K (55 aa).

Positions 1 to 18 are excised as a propeptide; that stretch reads MFYIHLENTFDLSSTILV. A helical transmembrane segment spans residues 26–46; it reads IFDPIVDVMPIIPLFFFLLAF.

Belongs to the PsbK family. PSII is composed of 1 copy each of membrane proteins PsbA, PsbB, PsbC, PsbD, PsbE, PsbF, PsbH, PsbI, PsbJ, PsbK, PsbL, PsbM, PsbT, PsbX, PsbY, PsbZ, Psb30/Ycf12, at least 3 peripheral proteins of the oxygen-evolving complex and a large number of cofactors. It forms dimeric complexes.

The protein resides in the plastid. It is found in the chloroplast thylakoid membrane. One of the components of the core complex of photosystem II (PSII). PSII is a light-driven water:plastoquinone oxidoreductase that uses light energy to abstract electrons from H(2)O, generating O(2) and a proton gradient subsequently used for ATP formation. It consists of a core antenna complex that captures photons, and an electron transfer chain that converts photonic excitation into a charge separation. This Anthoceros angustus (Hornwort) protein is Photosystem II reaction center protein K.